The primary structure comprises 819 residues: Ferric-pyoverdine 358 receptor (819 aa).

The N-terminal stretch at 1–47 (MSKPLPSALNPLAKALLIRHSLRPRHALSRIGMGLALSSALVFQVQA) is a signal peptide. Positions 115-122 (NTVTVTAS) match the TonB box motif. The TBDR plug domain occupies 166-276 (SIRETPQTIT…PSAVVNVIRK (111 aa)). Residues 281-819 (EFKSHIQAGV…NATVTLRYDF (539 aa)) form the TBDR beta-barrel domain. A TonB C-terminal box motif is present at residues 802 to 819 (YGHYGAPRNATVTLRYDF).

It belongs to the TonB-dependent receptor family.

Its subcellular location is the cell outer membrane. Specific receptor for the siderophore ferric pyoverdine (pseudobactin) 358. The chain is Ferric-pyoverdine 358 receptor (pupA) from Pseudomonas putida (Arthrobacter siderocapsulatus).